The chain runs to 157 residues: 2-C-methyl-D-erythritol 2,4-cyclodiphosphate synthase (157 aa).

Positions 8 and 10 each coordinate a divalent metal cation. 4-CDP-2-C-methyl-D-erythritol 2-phosphate is bound by residues 8 to 10 (DVH) and 34 to 35 (HS). H42 is an a divalent metal cation binding site. 4-CDP-2-C-methyl-D-erythritol 2-phosphate contacts are provided by residues 56–58 (DIG), 61–65 (FPDTD), 100–106 (AQAPKMA), 132–135 (TTTE), F139, and R142.

It belongs to the IspF family. As to quaternary structure, homotrimer. A divalent metal cation is required as a cofactor.

It carries out the reaction 4-CDP-2-C-methyl-D-erythritol 2-phosphate = 2-C-methyl-D-erythritol 2,4-cyclic diphosphate + CMP. It functions in the pathway isoprenoid biosynthesis; isopentenyl diphosphate biosynthesis via DXP pathway; isopentenyl diphosphate from 1-deoxy-D-xylulose 5-phosphate: step 4/6. Functionally, involved in the biosynthesis of isopentenyl diphosphate (IPP) and dimethylallyl diphosphate (DMAPP), two major building blocks of isoprenoid compounds. Catalyzes the conversion of 4-diphosphocytidyl-2-C-methyl-D-erythritol 2-phosphate (CDP-ME2P) to 2-C-methyl-D-erythritol 2,4-cyclodiphosphate (ME-CPP) with a corresponding release of cytidine 5-monophosphate (CMP). This chain is 2-C-methyl-D-erythritol 2,4-cyclodiphosphate synthase, found in Pseudomonas savastanoi pv. phaseolicola (strain 1448A / Race 6) (Pseudomonas syringae pv. phaseolicola (strain 1448A / Race 6)).